We begin with the raw amino-acid sequence, 407 residues long: Arginine deiminase (407 aa).

Catalysis depends on Cys397, which acts as the Amidino-cysteine intermediate.

This sequence belongs to the arginine deiminase family.

Its subcellular location is the cytoplasm. The enzyme catalyses L-arginine + H2O = L-citrulline + NH4(+). It functions in the pathway amino-acid degradation; L-arginine degradation via ADI pathway; carbamoyl phosphate from L-arginine: step 1/2. The sequence is that of Arginine deiminase (arcA) from Escherichia coli O6:H1 (strain CFT073 / ATCC 700928 / UPEC).